A 261-amino-acid chain; its full sequence is Imidazole glycerol phosphate synthase subunit HisF (261 aa).

Catalysis depends on residues aspartate 16 and aspartate 135.

This sequence belongs to the HisA/HisF family. In terms of assembly, heterodimer of HisH and HisF.

It is found in the cytoplasm. It catalyses the reaction 5-[(5-phospho-1-deoxy-D-ribulos-1-ylimino)methylamino]-1-(5-phospho-beta-D-ribosyl)imidazole-4-carboxamide + L-glutamine = D-erythro-1-(imidazol-4-yl)glycerol 3-phosphate + 5-amino-1-(5-phospho-beta-D-ribosyl)imidazole-4-carboxamide + L-glutamate + H(+). It participates in amino-acid biosynthesis; L-histidine biosynthesis; L-histidine from 5-phospho-alpha-D-ribose 1-diphosphate: step 5/9. In terms of biological role, IGPS catalyzes the conversion of PRFAR and glutamine to IGP, AICAR and glutamate. The HisF subunit catalyzes the cyclization activity that produces IGP and AICAR from PRFAR using the ammonia provided by the HisH subunit. This chain is Imidazole glycerol phosphate synthase subunit HisF, found in Mycolicibacterium vanbaalenii (strain DSM 7251 / JCM 13017 / BCRC 16820 / KCTC 9966 / NRRL B-24157 / PYR-1) (Mycobacterium vanbaalenii).